Reading from the N-terminus, the 46-residue chain is Photosystem II reaction center protein K (46 aa).

The propeptide occupies 1–9 (MESILMIFA). The helical transmembrane segment at 25-45 (LPVIPVLFLLLAFVWQAAVSF) threads the bilayer.

The protein belongs to the PsbK family. In terms of assembly, PSII is composed of 1 copy each of membrane proteins PsbA, PsbB, PsbC, PsbD, PsbE, PsbF, PsbH, PsbI, PsbJ, PsbK, PsbL, PsbM, PsbT, PsbX, PsbY, PsbZ, Psb30/Ycf12, at least 3 peripheral proteins of the oxygen-evolving complex and a large number of cofactors. It forms dimeric complexes.

The protein localises to the plastid. It localises to the chloroplast thylakoid membrane. One of the components of the core complex of photosystem II (PSII). PSII is a light-driven water:plastoquinone oxidoreductase that uses light energy to abstract electrons from H(2)O, generating O(2) and a proton gradient subsequently used for ATP formation. It consists of a core antenna complex that captures photons, and an electron transfer chain that converts photonic excitation into a charge separation. The protein is Photosystem II reaction center protein K of Stigeoclonium helveticum (Green alga).